Consider the following 360-residue polypeptide: Photosystem II protein D1 (360 aa).

3 helical membrane passes run 29–46 (YIGW…TATS), 118–133 (HFLL…EWEF), and 142–156 (WISV…AASA). A chlorophyll a-binding site is contributed by His-118. Tyr-126 is a binding site for pheophytin a. The [CaMn4O5] cluster site is built by Asp-170 and Glu-189. A helical transmembrane segment spans residues 197-218 (LHQLGVAGVFGGSLFSAMHGSL). His-198 lines the chlorophyll a pocket. Residues His-215 and 264 to 265 (SF) each bind a quinone. His-215 serves as a coordination point for Fe cation. Position 272 (His-272) interacts with Fe cation. The helical transmembrane segment at 274–288 (FLGLWPVVGIWFTSM) threads the bilayer. Residues His-332, Glu-333, Asp-342, and Ala-344 each contribute to the [CaMn4O5] cluster site. Residues 345 to 360 (SNESLPLALVAPAING) constitute a propeptide that is removed on maturation.

Belongs to the reaction center PufL/M/PsbA/D family. In terms of assembly, PSII is composed of 1 copy each of membrane proteins PsbA, PsbB, PsbC, PsbD, PsbE, PsbF, PsbH, PsbI, PsbJ, PsbK, PsbL, PsbM, PsbT, PsbX, PsbY, PsbZ, Psb30/Ycf12, at least 3 peripheral proteins of the oxygen-evolving complex and a large number of cofactors. It forms dimeric complexes. The D1/D2 heterodimer binds P680, chlorophylls that are the primary electron donor of PSII, and subsequent electron acceptors. It shares a non-heme iron and each subunit binds pheophytin, quinone, additional chlorophylls, carotenoids and lipids. D1 provides most of the ligands for the Mn4-Ca-O5 cluster of the oxygen-evolving complex (OEC). There is also a Cl(-1) ion associated with D1 and D2, which is required for oxygen evolution. The PSII complex binds additional chlorophylls, carotenoids and specific lipids. is required as a cofactor. Post-translationally, tyr-161 forms a radical intermediate that is referred to as redox-active TyrZ, YZ or Y-Z. In terms of processing, C-terminally processed by CTPA; processing is essential to allow assembly of the oxygen-evolving complex and thus photosynthetic growth.

The protein resides in the plastid. The protein localises to the chloroplast thylakoid membrane. The enzyme catalyses 2 a plastoquinone + 4 hnu + 2 H2O = 2 a plastoquinol + O2. In terms of biological role, photosystem II (PSII) is a light-driven water:plastoquinone oxidoreductase that uses light energy to abstract electrons from H(2)O, generating O(2) and a proton gradient subsequently used for ATP formation. It consists of a core antenna complex that captures photons, and an electron transfer chain that converts photonic excitation into a charge separation. The D1/D2 (PsbA/PsbD) reaction center heterodimer binds P680, the primary electron donor of PSII as well as several subsequent electron acceptors. This Antithamnion sp. (Red alga) protein is Photosystem II protein D1.